We begin with the raw amino-acid sequence, 696 residues long: Polyribonucleotide nucleotidyltransferase (696 aa).

Positions 483 and 489 each coordinate Mg(2+). In terms of domain architecture, KH spans 550-609 (PRITTIWVKVDKIRDVIGSGGKNIRSVTEATGVSIDIDDTGKINIASTNKEACDLAIKMI). The 69-residue stretch at 619 to 687 (GKLYMGTVKK…KQGKIKLSRK (69 aa)) folds into the S1 motif domain.

Belongs to the polyribonucleotide nucleotidyltransferase family. It depends on Mg(2+) as a cofactor.

The protein localises to the cytoplasm. It catalyses the reaction RNA(n+1) + phosphate = RNA(n) + a ribonucleoside 5'-diphosphate. In terms of biological role, involved in mRNA degradation. Catalyzes the phosphorolysis of single-stranded polyribonucleotides processively in the 3'- to 5'-direction. The polypeptide is Polyribonucleotide nucleotidyltransferase (Geobacter sp. (strain M21)).